The chain runs to 247 residues: MNVLPCSINTLKGLYDISGVEVGQHFYWQIGGFQVHAQVLITSWVVIAILLGSATVAVRNPQTIPTDGQNFFEYVLEFIRDLSKTQIGEEYGPWVPFIGTMFLFIFVSNWSGALLPWKIIQLPHGELAAPTNDINTTVALALPTSVAYFYAGLTKKGLGYFGKYIQPTPILLPINILEDFTKPLSLSFRLFGNILADELVVVVLVSLVPSVVPIPVMFLGLFTSGIQALIFATLAAAYIGESMEGHH.

Transmembrane regions (helical) follow at residues 38–58 (QVLI…TVAV), 95–115 (VPFI…GALL), 134–154 (INTT…AGLT), 199–219 (LVVV…VMFL), and 220–240 (GLFT…AYIG).

It belongs to the ATPase A chain family. In terms of assembly, F-type ATPases have 2 components, CF(1) - the catalytic core - and CF(0) - the membrane proton channel. CF(1) has five subunits: alpha(3), beta(3), gamma(1), delta(1), epsilon(1). CF(0) has four main subunits: a, b, b' and c.

It localises to the plastid. The protein localises to the chloroplast thylakoid membrane. Its function is as follows. Key component of the proton channel; it plays a direct role in the translocation of protons across the membrane. The protein is ATP synthase subunit a, chloroplastic of Platanus occidentalis (Sycamore).